The sequence spans 380 residues: DNA replication and repair protein RecF (380 aa).

Position 30–37 (30–37) interacts with ATP; that stretch reads GENAQGKT.

Belongs to the RecF family.

Its subcellular location is the cytoplasm. In terms of biological role, the RecF protein is involved in DNA metabolism; it is required for DNA replication and normal SOS inducibility. RecF binds preferentially to single-stranded, linear DNA. It also seems to bind ATP. This is DNA replication and repair protein RecF from Synechococcus sp. (strain JA-2-3B'a(2-13)) (Cyanobacteria bacterium Yellowstone B-Prime).